Here is a 160-residue protein sequence, read N- to C-terminus: NADH-quinone oxidoreductase subunit B (160 aa).

[4Fe-4S] cluster-binding residues include cysteine 37, cysteine 38, cysteine 102, and cysteine 132.

Belongs to the complex I 20 kDa subunit family. As to quaternary structure, NDH-1 is composed of 14 different subunits. Subunits NuoB, C, D, E, F, and G constitute the peripheral sector of the complex. [4Fe-4S] cluster is required as a cofactor.

The protein localises to the cell membrane. The enzyme catalyses a quinone + NADH + 5 H(+)(in) = a quinol + NAD(+) + 4 H(+)(out). Functionally, NDH-1 shuttles electrons from NADH, via FMN and iron-sulfur (Fe-S) centers, to quinones in the respiratory chain. Couples the redox reaction to proton translocation (for every two electrons transferred, four hydrogen ions are translocated across the cytoplasmic membrane), and thus conserves the redox energy in a proton gradient. The polypeptide is NADH-quinone oxidoreductase subunit B (Polynucleobacter asymbioticus (strain DSM 18221 / CIP 109841 / QLW-P1DMWA-1) (Polynucleobacter necessarius subsp. asymbioticus)).